A 205-amino-acid polypeptide reads, in one-letter code: Non-specific lipid transfer protein GPI-anchored 21 (205 aa).

An N-terminal signal peptide occupies residues 1-27 (MNSNSFLISAALIFSLLSSNSPTSILA). 4 cysteine pairs are disulfide-bonded: Cys33/Cys75, Cys44/Cys59, Cys60/Cys100, and Cys73/Cys109. Asn89 is a glycosylation site (N-linked (GlcNAc...) asparagine). The disordered stretch occupies residues 116–182 (LPTPGPASFG…FAPPPPSSSP (67 aa)). The segment covering 126–156 (PTTSPTDSQTSDPEGSASFRPPTSPTTSQTP) has biased composition (low complexity). Ser179 is lipidated: GPI-anchor amidated serine. A propeptide spans 180-205 (SSPSSSHSLKLSYLLFAFAFTIIKFI) (removed in mature form).

It belongs to the plant LTP family.

The protein localises to the cell membrane. Functionally, probable lipid transfer protein. This Arabidopsis thaliana (Mouse-ear cress) protein is Non-specific lipid transfer protein GPI-anchored 21.